The primary structure comprises 385 residues: Ribosomal RNA large subunit methyltransferase G (385 aa).

This sequence belongs to the methyltransferase superfamily. RlmG family.

It is found in the cytoplasm. The catalysed reaction is guanosine(1835) in 23S rRNA + S-adenosyl-L-methionine = N(2)-methylguanosine(1835) in 23S rRNA + S-adenosyl-L-homocysteine + H(+). Specifically methylates the guanine in position 1835 (m2G1835) of 23S rRNA. The sequence is that of Ribosomal RNA large subunit methyltransferase G from Vibrio parahaemolyticus serotype O3:K6 (strain RIMD 2210633).